The chain runs to 114 residues: Anti-adapter protein IraM (114 aa).

This sequence belongs to the IraM/RssC family.

The protein resides in the cytoplasm. Functionally, involved in the stabilization of the sigma stress factor RpoS. This Citrobacter koseri (strain ATCC BAA-895 / CDC 4225-83 / SGSC4696) protein is Anti-adapter protein IraM.